The chain runs to 344 residues: Protein pelota homolog (344 aa).

The protein belongs to the eukaryotic release factor 1 family. Pelota subfamily. In terms of assembly, monomer. Requires a divalent metal cation as cofactor.

The protein resides in the cytoplasm. Functionally, may function in recognizing stalled ribosomes, interact with stem-loop structures in stalled mRNA molecules, and effect endonucleolytic cleavage of the mRNA. May play a role in the release non-functional ribosomes and degradation of damaged mRNAs. Has endoribonuclease activity. In Saccharolobus islandicus (strain M.16.27) (Sulfolobus islandicus), this protein is Protein pelota homolog.